Consider the following 448-residue polypeptide: MSRTLTSRQAEELHKSIIAYLAANNFQDSVTAMRTELNLGEEIFDPATAKKYETLLEKKWTSVVRLQKKTELDSATPTSLSNRKQDPASWLPAGPPRHVLQSHRTPINCVAFHPIYSSIASGDEDAIIKIWDWEFGELERTVKGHTKAVLDLDYGGPKGHTLLASCSSDLTIKLWDPSDEYKNIRTLPGHDHSVSAVRFIPSGAPGAPLSGNLLASASRDVTVRIWDVTTGYCLKTIRGHSDWIRDVSPSLDGKYLLSTGNDRTLRLWDISMNTPETKMVMIGHEHCVECCAFAPPTSYQHLATMAGLKKAPPASSTAEFMATGSRDKTIRLWDSRGTCIKTLIGHDNWVRSLVFHPSGKFLLSVSDDKTIRCWDLSQEGKCVKTLEGMHEHFITSLRWAPPITKGPADEANGEIGTPKKAAAAPLDVQIRCVIATGSVDTSLRIFSR.

In terms of domain architecture, LisH spans 9-41 (QAEELHKSIIAYLAANNFQDSVTAMRTELNLGE). The disordered stretch occupies residues 74–95 (SATPTSLSNRKQDPASWLPAGP). WD repeat units lie at residues 102 to 143 (SHRT…RTVK), 145 to 185 (HTKA…KNIR), 189 to 236 (GHDH…CLKT), 239 to 278 (GHSD…PETK), 283 to 343 (GHEH…IKTL), 345 to 384 (GHDN…KCVK), and 389 to 444 (MHEH…TSLR).

Belongs to the WD repeat LIS1/nudF family. Self-associates. Interacts with NDL1 and dynein.

Its subcellular location is the cytoplasm. It is found in the cytoskeleton. The protein resides in the spindle pole. Positively regulates the activity of the minus-end directed microtubule motor protein dynein. May enhance dynein-mediated microtubule sliding by targeting dynein to the microtubule plus end. Required for nuclear migration during vegetative growth as well as development. Required for retrograde early endosome (EE) transport from the hyphal tip. Required for localization of dynein to the mitotic spindle poles. Recruits additional proteins to the dynein complex at SPBs. This Fusarium vanettenii (strain ATCC MYA-4622 / CBS 123669 / FGSC 9596 / NRRL 45880 / 77-13-4) (Fusarium solani subsp. pisi) protein is Nuclear distribution protein PAC1.